The chain runs to 451 residues: MDAERIVFKVRNQLVSVKPEVISDQYEYKYPAITDKKKPSITLGRAPDLKTAYKSILSGMNAAKLDPDDVCSYLAGAMILFEGVCPEDWVSYGIHIARKGDKITPATLVDIVRTNTEGNWAQTGGQDLTRDPTISEHASLVGLLLCLYRLSKIVGQNTGNYKTNVADRMEQIFETAPFVKIVEHHTLMTTHKMCANWSTIPNFRFLAGTYDMFFSRVDHLYSAIRVGTVVTAYEDCSGLVSFTGFIKQINLTAREAILYFFHKNFEEEIKRMFEPGQETAVPHSYFIHFRSLGLSGKSPYSSNAVGHVFNLIHFVGCYMGQIRSLNATVIQSCAPHEMSVLGGYLGEEFFGKGTFERRFFRDEKELQDYEEAEATKIEAALADDGTVNSDDEDFFSGDTRSPEAVYTRIMMNGGRLKGAHIRRYVSVSSSHQARPNSFAEFLNKTYSSDSR.

Serine 389 is modified (phosphoserine; by host CK2).

Belongs to the lyssavirus nucleocapsid protein family. In terms of assembly, homomultimerizes to form the nucleocapsid. Binds to viral genomic RNA. Post-translationally, phosphorylated by host.

The protein resides in the virion. It is found in the host cytoplasm. Encapsidates the genome, protecting it from nucleases. If expressed without protein P it binds non-specifically RNA and therefore can bind it's own mRNA. Interaction with protein P abolishes any non-specific RNA binding, and prevents phosphorylation. The soluble N-P complex encapsidates specifically the genomic RNA, with protein N protecting the genome like a pearl necklace. The encapsidated genomic RNA is termed the nucleocapsid (NC) and serves as template for viral transcription and replication. Protein N binds protein P in the NC through a different interaction, and can be phosphorylated. Subsequent viral replication is dependent on intracellular concentration of newly synthesized protein N. During replication, encapsidation by protein N is coupled to RNA synthesis and all replicative products are resistant to nucleases. This chain is Nucleoprotein (N), found in Duvenhage virus (DUVV).